The following is a 146-amino-acid chain: Large ribosomal subunit protein uL13 (146 aa).

Residues 125-146 (YAGPKHPHAAQQPKVYEPRPRG) form a disordered region.

The protein belongs to the universal ribosomal protein uL13 family. In terms of assembly, part of the 50S ribosomal subunit.

Functionally, this protein is one of the early assembly proteins of the 50S ribosomal subunit, although it is not seen to bind rRNA by itself. It is important during the early stages of 50S assembly. This Roseiflexus sp. (strain RS-1) protein is Large ribosomal subunit protein uL13.